The following is a 308-amino-acid chain: ATP synthase gamma chain (308 aa).

This sequence belongs to the ATPase gamma chain family. F-type ATPases have 2 components, CF(1) - the catalytic core - and CF(0) - the membrane proton channel. CF(1) has five subunits: alpha(3), beta(3), gamma(1), delta(1), epsilon(1). CF(0) has three main subunits: a, b and c.

Its subcellular location is the cell inner membrane. Its function is as follows. Produces ATP from ADP in the presence of a proton gradient across the membrane. The gamma chain is believed to be important in regulating ATPase activity and the flow of protons through the CF(0) complex. The polypeptide is ATP synthase gamma chain (Bartonella tribocorum (strain CIP 105476 / IBS 506)).